A 160-amino-acid chain; its full sequence is Protein-export protein SecB (160 aa).

It belongs to the SecB family. In terms of assembly, homotetramer, a dimer of dimers. One homotetramer interacts with 1 SecA dimer.

It is found in the cytoplasm. Functionally, one of the proteins required for the normal export of preproteins out of the cell cytoplasm. It is a molecular chaperone that binds to a subset of precursor proteins, maintaining them in a translocation-competent state. It also specifically binds to its receptor SecA. The chain is Protein-export protein SecB from Burkholderia multivorans (strain ATCC 17616 / 249).